A 230-amino-acid polypeptide reads, in one-letter code: Acyl-protein thioesterase 1 (230 aa).

Catalysis depends on charge relay system residues serine 119, aspartate 174, and histidine 208. The residue at position 224 (lysine 224) is an N6-acetyllysine.

The protein belongs to the AB hydrolase superfamily. AB hydrolase 2 family. As to quaternary structure, homodimer.

The protein resides in the cytoplasm. Its subcellular location is the cell membrane. It localises to the nucleus membrane. The protein localises to the endoplasmic reticulum. It catalyses the reaction S-hexadecanoyl-L-cysteinyl-[protein] + H2O = L-cysteinyl-[protein] + hexadecanoate + H(+). The catalysed reaction is 1-hexadecanoyl-sn-glycero-3-phosphocholine + H2O = sn-glycerol 3-phosphocholine + hexadecanoate + H(+). It carries out the reaction a 1-(9Z-octadecenoyl)-2-acyl-sn-glycero-3-phosphocholine + H2O = a 2-acyl-sn-glycero-3-phosphocholine + (9Z)-octadecenoate + H(+). Acts as an acyl-protein thioesterase. Hydrolyzes fatty acids from S-acylated cysteine residues in proteins such as trimeric G alpha proteins or HRAS. Acts as a palmitoyl thioesterase that catalyzes depalmitoylation of proteins, such as ADRB2, KCNMA1 and SQSTM1. Acts as a negative regulator of autophagy by mediating palmitoylation of SQSTM1, decreasing affinity between SQSTM1 and ATG8 proteins and recruitment of ubiquitinated cargo proteins to autophagosomes. Acts as a lysophospholipase and hydrolyzes lysophosphatidylcholine (lyso-PC). Also hydrolyzes lysophosphatidylethanolamine (lyso-PE), lysophosphatidylinositol (lyso-PI) and lysophosphatidylserine (lyso-PS). Has much higher thioesterase activity than lysophospholipase activity. Contributes to the production of lysophosphatidic acid (LPA) during blood coagulation by recognizing and cleaving plasma phospholipids to generate lysophospholipids which in turn act as substrates for ENPP2 to produce LPA. This Mus musculus (Mouse) protein is Acyl-protein thioesterase 1 (Lypla1).